The sequence spans 558 residues: Nucleoprotein (558 aa).

A binding site for the cap structure m7GTP region spans residues methionine 54–isoleucine 237. Mg(2+) is bound by residues aspartate 382 and glutamate 384. 2 residues coordinate Mn(2+): aspartate 382 and glutamate 384. Residues glutamate 392, cysteine 499, histidine 502, and cysteine 518 each contribute to the Zn(2+) site. Aspartate 522 is a Mg(2+) binding site. Residue aspartate 522 participates in Mn(2+) binding.

The protein belongs to the arenaviridae nucleocapsid protein family. Homomultimerizes to form the nucleocapsid. Binds to viral genomic RNA. Interacts with glycoprotein G2. Interacts with protein Z; this interaction probably directs the encapsidated genome to budding sites. Interacts with protein L; this interaction does not interfere with Z-L interaction. Interacts with host IKBKE (via Protein kinase domain); the interaction inhibits IKBKE kinase activity.

Its subcellular location is the virion. The protein resides in the host cytoplasm. Its function is as follows. Encapsidates the genome, protecting it from nucleases. The encapsidated genomic RNA is termed the nucleocapsid (NC). Serves as template for viral transcription and replication. The increased presence of protein N in host cell does not seem to trigger the switch from transcription to replication as observed in other negative strain RNA viruses. Through the interaction with host IKBKE, strongly inhibits the phosphorylation and nuclear translocation of host IRF3, a protein involved in interferon activation pathway, leading to the inhibition of interferon-beta and IRF3-dependent promoters activation. Also encodes a functional 3'-5' exoribonuclease that degrades preferentially dsRNA substrates and thereby participates in the suppression of interferon induction. This is Nucleoprotein from Lymphocytic choriomeningitis virus (strain Armstrong) (LCMV).